The following is a 261-amino-acid chain: MSDALIRLEKVAVRFAGQNVLDNIHLSVEPGQIVTLIGPNGAGKTTLVRAVLGLLKPDSGSVWRKPKLRVGYMPQKLHVDPTLPLSVLRFLRLVPGVDRPRALAALKEVGAEHVIDSPVQSVSGGEMQRVLLARALLREPELLVLDEPVQGVDVAGQAELYSLITRLRDRHGCGVLMVSHDLHLVMSTTDQVVCLNRHVCCSGHPEQVSGDPAFVELFGNNAPSLAIYHHHHDHAHDLHGSVVKGPVTGQPHVHGDSCKHG.

One can recognise an ABC transporter domain in the interval isoleucine 6–asparagine 221. Glycine 38–threonine 45 contributes to the ATP binding site.

This sequence belongs to the ABC transporter superfamily. Zinc importer (TC 3.A.1.15.5) family. As to quaternary structure, the complex is composed of two ATP-binding proteins (ZnuC), two transmembrane proteins (ZnuB) and a solute-binding protein (ZnuA).

It localises to the cell inner membrane. It catalyses the reaction Zn(2+)(out) + ATP(in) + H2O(in) = Zn(2+)(in) + ADP(in) + phosphate(in) + H(+)(in). Its function is as follows. Part of the ABC transporter complex ZnuABC involved in zinc import. Responsible for energy coupling to the transport system. In Pseudomonas fluorescens (strain Pf0-1), this protein is Zinc import ATP-binding protein ZnuC.